A 274-amino-acid chain; its full sequence is Dermonecrotic toxin LarSicTox-alphaIB2bii (274 aa).

H3 is a catalytic residue. Mg(2+) is bound by residues E23 and D25. The Nucleophile role is filled by H39. Intrachain disulfides connect C43–C49 and C45–C188. D83 is a Mg(2+) binding site. The N-linked (GlcNAc...) asparagine glycan is linked to N251.

This sequence belongs to the arthropod phospholipase D family. Class II subfamily. Requires Mg(2+) as cofactor. In terms of tissue distribution, expressed by the venom gland.

The protein localises to the secreted. It carries out the reaction an N-(acyl)-sphingosylphosphocholine = an N-(acyl)-sphingosyl-1,3-cyclic phosphate + choline. The catalysed reaction is an N-(acyl)-sphingosylphosphoethanolamine = an N-(acyl)-sphingosyl-1,3-cyclic phosphate + ethanolamine. It catalyses the reaction a 1-acyl-sn-glycero-3-phosphocholine = a 1-acyl-sn-glycero-2,3-cyclic phosphate + choline. The enzyme catalyses a 1-acyl-sn-glycero-3-phosphoethanolamine = a 1-acyl-sn-glycero-2,3-cyclic phosphate + ethanolamine. In terms of biological role, dermonecrotic toxins cleave the phosphodiester linkage between the phosphate and headgroup of certain phospholipids (sphingolipid and lysolipid substrates), forming an alcohol (often choline) and a cyclic phosphate. This toxin acts on sphingomyelin (SM). It may also act on ceramide phosphoethanolamine (CPE), lysophosphatidylcholine (LPC) and lysophosphatidylethanolamine (LPE), but not on lysophosphatidylserine (LPS), and lysophosphatidylglycerol (LPG). It acts by transphosphatidylation, releasing exclusively cyclic phosphate products as second products. Induces dermonecrosis, hemolysis, increased vascular permeability, edema, inflammatory response, and platelet aggregation. The sequence is that of Dermonecrotic toxin LarSicTox-alphaIB2bii from Loxosceles arizonica (Arizona brown spider).